We begin with the raw amino-acid sequence, 314 residues long: Epithelial cell adhesion molecule (314 aa).

The N-terminal stretch at 1-23 is a signal peptide; it reads MAPPQVLAFGLLLAAATAAVAAA. Residues 24–265 lie on the Extracellular side of the membrane; the sequence is QQGCVCENYK…PPEFSMQGLQ (242 aa). 6 disulfides stabilise this stretch: cysteine 27–cysteine 46, cysteine 29–cysteine 59, cysteine 38–cysteine 48, cysteine 66–cysteine 99, cysteine 110–cysteine 116, and cysteine 118–cysteine 135. N-linked (GlcNAc...) asparagine glycosylation occurs at asparagine 37. Residues 63 to 135 enclose the Thyroglobulin type-1 domain; it reads ASKCLVMKAE…RTDKDSEISC (73 aa). A glycan (N-linked (GlcNAc...) asparagine) is linked at asparagine 111. A glycan (N-linked (GlcNAc...) asparagine) is linked at asparagine 198. The helical transmembrane segment at 266–288 threads the bilayer; sequence AGIIAVIAVVAIAIVAGIIVLIV. The Cytoplasmic segment spans residues 289–314; that stretch reads STKKRRAKYEKAEIKEMGEMHRELNA.

This sequence belongs to the EPCAM family. In terms of assembly, monomer. Interacts with phosphorylated CLDN7. Glycosylation at Asn-198 is crucial for protein stability.

It localises to the lateral cell membrane. It is found in the cell junction. The protein resides in the tight junction. May act as a physical homophilic interaction molecule between intestinal epithelial cells (IECs) and intraepithelial lymphocytes (IELs) at the mucosal epithelium for providing immunological barrier as a first line of defense against mucosal infection. Plays a role in embryonic stem cells proliferation and differentiation. Up-regulates the expression of FABP5, MYC and cyclins A and E. The polypeptide is Epithelial cell adhesion molecule (TACSTD1) (Sus scrofa (Pig)).